The primary structure comprises 183 residues: ATP synthase subunit delta (183 aa).

Belongs to the ATPase delta chain family. In terms of assembly, F-type ATPases have 2 components, F(1) - the catalytic core - and F(0) - the membrane proton channel. F(1) has five subunits: alpha(3), beta(3), gamma(1), delta(1), epsilon(1). F(0) has three main subunits: a(1), b(2) and c(10-14). The alpha and beta chains form an alternating ring which encloses part of the gamma chain. F(1) is attached to F(0) by a central stalk formed by the gamma and epsilon chains, while a peripheral stalk is formed by the delta and b chains.

It is found in the cell inner membrane. Its function is as follows. F(1)F(0) ATP synthase produces ATP from ADP in the presence of a proton or sodium gradient. F-type ATPases consist of two structural domains, F(1) containing the extramembraneous catalytic core and F(0) containing the membrane proton channel, linked together by a central stalk and a peripheral stalk. During catalysis, ATP synthesis in the catalytic domain of F(1) is coupled via a rotary mechanism of the central stalk subunits to proton translocation. In terms of biological role, this protein is part of the stalk that links CF(0) to CF(1). It either transmits conformational changes from CF(0) to CF(1) or is implicated in proton conduction. The sequence is that of ATP synthase subunit delta from Desulfosudis oleivorans (strain DSM 6200 / JCM 39069 / Hxd3) (Desulfococcus oleovorans).